The sequence spans 501 residues: O-phosphoseryl-tRNA(Sec) selenium transferase (501 aa).

Positions 1–44 are tetramerization; the sequence is MNRESFAAGERLVSPAYVRQGCEARRSHEHLIRLLLEKGKCPEN. A Phosphoserine modification is found at serine 14. Arginine 75 contributes to the pyridoxal 5'-phosphate binding site. Residues 96–106 are phosphate loop (P-loop); that stretch reads GRSGDISAVQP. Residues arginine 97, serine 98, and glutamine 105 each coordinate substrate. Arginine 271 contacts tRNA. Lysine 284 is modified (N6-(pyridoxal phosphate)lysine). Position 313 (arginine 313) interacts with substrate. Residues arginine 398 and lysine 463 each contribute to the tRNA site. The segment at 474–493 is SLA/LP epitope; that stretch reads DKTEDVDIEEMALKLDNVLL.

Belongs to the SepSecS family. As to quaternary structure, homotetramer formed by a catalytic dimer and a non-catalytic dimer serving as a binding platform that orients tRNASec for catalysis. Each tetramer binds the CCA ends of two tRNAs which point to the active sites of the catalytic dimer. It depends on pyridoxal 5'-phosphate as a cofactor. In terms of tissue distribution, primarily expressed in liver, pancreas, kidney and lung. Overexpressed in PHA-stimulated T-cells.

It localises to the cytoplasm. It catalyses the reaction O-phospho-L-seryl-tRNA(Sec) + selenophosphate + H2O = L-selenocysteinyl-tRNA(Sec) + 2 phosphate. It functions in the pathway aminoacyl-tRNA biosynthesis; selenocysteinyl-tRNA(Sec) biosynthesis; selenocysteinyl-tRNA(Sec) from L-seryl-tRNA(Sec) (archaeal/eukaryal route): step 2/2. Converts O-phosphoseryl-tRNA(Sec) to selenocysteinyl-tRNA(Sec) required for selenoprotein biosynthesis. The sequence is that of O-phosphoseryl-tRNA(Sec) selenium transferase (SEPSECS) from Homo sapiens (Human).